The chain runs to 516 residues: Sodium channel protein Nach (516 aa).

At 1–49 (MGHEEELSPEQVDLKVSPLMGSLKRTWNDFCATSSIHGLRYTRDEDTNR) the chain is on the cytoplasmic side. Residues 50–70 (IVHFVWLLISLVMFICAVVMA) form a helical membrane-spanning segment. Over 71–452 (RTFYIDFRSN…LVSNLGSAFS (382 aa)) the chain is Extracellular. N-linked (GlcNAc...) asparagine glycosylation is found at N128, N165, N220, and N348. Residues 453–473 (LFVGMSMLSVVEIMYYFSVIL) traverse the membrane as a helical segment. Topologically, residues 474 to 516 (RKNYVLECEARKKMLHKGPKFAWPKANDSHSKHQKSVFIIHKM) are cytoplasmic.

Belongs to the amiloride-sensitive sodium channel (TC 1.A.6) family.

It is found in the membrane. Its function is as follows. Part of a complex that plays a role in tracheal liquid clearance. Probable role in sodium transport. The sequence is that of Sodium channel protein Nach (Nach) from Drosophila ananassae (Fruit fly).